The following is a 446-amino-acid chain: 3-phosphoshikimate 1-carboxyvinyltransferase (446 aa).

3-phosphoshikimate contacts are provided by Lys26, Ser27, and Arg31. Position 26 (Lys26) interacts with phosphoenolpyruvate. The phosphoenolpyruvate site is built by Gly100 and Arg128. 3-phosphoshikimate contacts are provided by Ser171, Ser172, Gln173, Ser200, Glu315, and His344. Position 173 (Gln173) interacts with phosphoenolpyruvate. Glu315 serves as the catalytic Proton acceptor. Phosphoenolpyruvate contacts are provided by Arg348, Arg389, and Lys414.

It belongs to the EPSP synthase family. Monomer.

It localises to the cytoplasm. The catalysed reaction is 3-phosphoshikimate + phosphoenolpyruvate = 5-O-(1-carboxyvinyl)-3-phosphoshikimate + phosphate. Its pathway is metabolic intermediate biosynthesis; chorismate biosynthesis; chorismate from D-erythrose 4-phosphate and phosphoenolpyruvate: step 6/7. In terms of biological role, catalyzes the transfer of the enolpyruvyl moiety of phosphoenolpyruvate (PEP) to the 5-hydroxyl of shikimate-3-phosphate (S3P) to produce enolpyruvyl shikimate-3-phosphate and inorganic phosphate. The protein is 3-phosphoshikimate 1-carboxyvinyltransferase of Mycolicibacterium gilvum (strain PYR-GCK) (Mycobacterium gilvum (strain PYR-GCK)).